Consider the following 107-residue polypeptide: Iron-binding protein IscA (107 aa).

Residues Cys35, Cys99, and Cys101 each coordinate Fe cation.

Belongs to the HesB/IscA family. As to quaternary structure, homodimer; may form tetramers and higher multimers. Requires Fe cation as cofactor.

Functionally, is able to transfer iron-sulfur clusters to apo-ferredoxin. Multiple cycles of [2Fe2S] cluster formation and transfer are observed, suggesting that IscA acts catalytically. Recruits intracellular free iron so as to provide iron for the assembly of transient iron-sulfur cluster in IscU in the presence of IscS, L-cysteine and the thioredoxin reductase system TrxA/TrxB. The polypeptide is Iron-binding protein IscA (Pectobacterium atrosepticum (strain SCRI 1043 / ATCC BAA-672) (Erwinia carotovora subsp. atroseptica)).